The chain runs to 60 residues: Small, acid-soluble spore protein C2 (60 aa).

This sequence belongs to the alpha/beta-type SASP family. Post-translationally, SASP are degraded in the first minutes of spore germination and provide amino acids for both new protein synthesis and metabolism.

Its function is as follows. SASP are bound to spore DNA. They are double-stranded DNA-binding proteins that cause DNA to change to an a-like conformation. They protect the DNA backbone from chemical and enzymatic cleavage and are thus involved in dormant spore's high resistance to UV light. The chain is Small, acid-soluble spore protein C2 (sspC2) from Clostridium perfringens (strain 13 / Type A).